Here is a 65-residue protein sequence, read N- to C-terminus: Omega-lycotoxin-Am1f (65 aa).

A propeptide spanning residues 1-18 is cleaved from the precursor; it reads GDEEDEVEETLPVAEEGR. Intrachain disulfides connect Cys-22-Cys-37, Cys-29-Cys-42, Cys-36-Cys-62, and Cys-44-Cys-60.

This sequence belongs to the neurotoxin omega-lctx family. Expressed by the venom gland.

The protein resides in the secreted. Modulates Cav2.1/CACNA1A voltage-gated calcium channels (P/Q-type currents) in rat cerebellar Purkinje cells and hippocampal CA1-CA3 neurons. At saturating concentrations (&gt;10 nM) decelerates activation kinetics and slightly increases peak amplitude without affecting deactivation kinetics. In vivo, does not cause death when intravenously injected into mice. In rat models, through its activity on Cav2.1/CACNA1A, has an ameliorative effect on memory defects provoked by hyperstimulation of N-methyl-D-aspartate receptors (NMDARs) in the hippocampus. The chain is Omega-lycotoxin-Am1f from Alopecosa marikovskyi (Wolf spider).